The sequence spans 190 residues: CASP-like protein 2U1 (190 aa).

At 1-16 (MAFTSLLGSDAERKVA) the chain is on the cytoplasmic side. The chain crosses the membrane as a helical span at residues 17–37 (VAEVALRAVLCGLGALAAALV). Residues 38 to 59 (ATDTQTRTFFSLQKKATYTDMK) are Extracellular-facing. Residues 60 to 80 (AMVLLVAAAAAAAGYSLLQAA) traverse the membrane as a helical segment. The Cytoplasmic portion of the chain corresponds to 81–100 (RCCCCVALLRTSIRPRARLL). Residues 101 to 121 (LAWCVFACDQALAYALLAAVV) traverse the membrane as a helical segment. Residues 122–152 (AALQASVVAKQGLPQLQWMAICALYGAFCRQ) lie on the Extracellular side of the membrane. A helical membrane pass occupies residues 153 to 173 (AGAGVACAVAAAVDAALLAFL). The Cytoplasmic segment spans residues 174-190 (SAFNLFRLYGAKATTTT).

Belongs to the Casparian strip membrane proteins (CASP) family. As to quaternary structure, homodimer and heterodimers.

It is found in the cell membrane. The polypeptide is CASP-like protein 2U1 (Zea mays (Maize)).